An 814-amino-acid polypeptide reads, in one-letter code: Acyl-coenzyme A dehydrogenase (814 aa).

Glutamate 497 serves as the catalytic Proton acceptor.

The protein belongs to the acyl-CoA dehydrogenase family. FAD serves as cofactor.

The enzyme catalyses a medium-chain 2,3-saturated fatty acyl-CoA + oxidized [electron-transfer flavoprotein] + H(+) = a medium-chain (2E)-enoyl-CoA + reduced [electron-transfer flavoprotein]. It catalyses the reaction a long-chain 2,3-saturated fatty acyl-CoA + oxidized [electron-transfer flavoprotein] + H(+) = a long-chain (2E)-enoyl-CoA + reduced [electron-transfer flavoprotein]. Its pathway is lipid metabolism; fatty acid beta-oxidation. Its function is as follows. Catalyzes the dehydrogenation of acyl-coenzymes A (acyl-CoAs) to 2-enoyl-CoAs, the first step of the beta-oxidation cycle of fatty acid degradation. Is required for S.typhimurium to utilize medium- and long-chain fatty acids as sole carbon sources for growth. Is needed for bacterial survival during carbone-source starvation. The sequence is that of Acyl-coenzyme A dehydrogenase (fadE) from Salmonella typhimurium (strain LT2 / SGSC1412 / ATCC 700720).